The chain runs to 228 residues: Ribosomal RNA small subunit methyltransferase G (228 aa).

Residues Gly92, Phe97, 115-117 (EAT), 143-144 (AE), and Arg156 each bind S-adenosyl-L-methionine.

The protein belongs to the methyltransferase superfamily. RNA methyltransferase RsmG family.

Its subcellular location is the cytoplasm. Its function is as follows. Specifically methylates the N7 position of a guanine in 16S rRNA. The protein is Ribosomal RNA small subunit methyltransferase G of Thermosynechococcus vestitus (strain NIES-2133 / IAM M-273 / BP-1).